The primary structure comprises 181 residues: Large ribosomal subunit protein uL10 (181 aa).

Belongs to the universal ribosomal protein uL10 family. Part of the ribosomal stalk of the 50S ribosomal subunit. The N-terminus interacts with L11 and the large rRNA to form the base of the stalk. The C-terminus forms an elongated spine to which L12 dimers bind in a sequential fashion forming a multimeric L10(L12)X complex.

Forms part of the ribosomal stalk, playing a central role in the interaction of the ribosome with GTP-bound translation factors. This is Large ribosomal subunit protein uL10 from Nostoc sp. (strain PCC 7120 / SAG 25.82 / UTEX 2576).